The following is a 384-amino-acid chain: 8-amino-7-oxononanoate synthase (384 aa).

R21 is a binding site for substrate. 108–109 (GF) provides a ligand contact to pyridoxal 5'-phosphate. Position 133 (H133) interacts with substrate. 3 residues coordinate pyridoxal 5'-phosphate: S179, H207, and T233. K236 carries the N6-(pyridoxal phosphate)lysine modification. T352 contacts substrate.

This sequence belongs to the class-II pyridoxal-phosphate-dependent aminotransferase family. BioF subfamily. As to quaternary structure, homodimer. Requires pyridoxal 5'-phosphate as cofactor.

It carries out the reaction 6-carboxyhexanoyl-[ACP] + L-alanine + H(+) = (8S)-8-amino-7-oxononanoate + holo-[ACP] + CO2. It participates in cofactor biosynthesis; biotin biosynthesis. In terms of biological role, catalyzes the decarboxylative condensation of pimeloyl-[acyl-carrier protein] and L-alanine to produce 8-amino-7-oxononanoate (AON), [acyl-carrier protein], and carbon dioxide. This chain is 8-amino-7-oxononanoate synthase, found in Escherichia coli O9:H4 (strain HS).